A 358-amino-acid chain; its full sequence is MRERLLAAERVKAIEWRDGTLRLLDQRLLPQEEVWLEHESAAEVAKAIRDMVVRGAPAIGISAAYGIVLGARARLAQGGDWRAALEEDFRLLADSRPTAVNLFWALNRMRDRLERMKEGDQPLAVLEAEAISIHESDREANLTMAQLGMELIRKQQGSPQNILTHCNTGALATGGFGTALGVIRAAHLEGLVNRIYADETRPWLQGSRLTAWELANEGIPVSLNVDSAAAHLMKTENITWVIVGADRITANGDVANKIGTYQLAVNAMHHGVRFMVVAPSSTIDMNLESGEDIPIEERDGRELLEIGGRRVAAEVDAYNPVFDVTPADLIDAIVTERGVVERPDAERMAALMSRKRLH.

Residues R54–A56, R96, and Q205 contribute to the substrate site. The active-site Proton donor is the D246. N256 to K257 serves as a coordination point for substrate.

This sequence belongs to the eIF-2B alpha/beta/delta subunits family. MtnA subfamily.

The catalysed reaction is 5-(methylsulfanyl)-alpha-D-ribose 1-phosphate = 5-(methylsulfanyl)-D-ribulose 1-phosphate. It participates in amino-acid biosynthesis; L-methionine biosynthesis via salvage pathway; L-methionine from S-methyl-5-thio-alpha-D-ribose 1-phosphate: step 1/6. Functionally, catalyzes the interconversion of methylthioribose-1-phosphate (MTR-1-P) into methylthioribulose-1-phosphate (MTRu-1-P). In Pseudomonas aeruginosa (strain UCBPP-PA14), this protein is Methylthioribose-1-phosphate isomerase.